A 336-amino-acid chain; its full sequence is Ribosomal RNA large subunit methyltransferase F (336 aa).

This sequence belongs to the methyltransferase superfamily. METTL16/RlmF family.

It is found in the cytoplasm. The catalysed reaction is adenosine(1618) in 23S rRNA + S-adenosyl-L-methionine = N(6)-methyladenosine(1618) in 23S rRNA + S-adenosyl-L-homocysteine + H(+). In terms of biological role, specifically methylates the adenine in position 1618 of 23S rRNA. The chain is Ribosomal RNA large subunit methyltransferase F from Yersinia pseudotuberculosis serotype I (strain IP32953).